We begin with the raw amino-acid sequence, 286 residues long: 2-hydroxy-6-oxo-6-phenylhexa-2,4-dienoate hydrolase (286 aa).

The AB hydrolase-1 domain occupies 36-271; it reads VIMLHGGGPG…RCGHWAQWEH (236 aa). Residues 42-43, N51, N111, S180, and R190 contribute to the substrate site; that span reads GG. The active-site Proton acceptor is the H265. W266 contributes to the substrate binding site.

The protein belongs to the AB hydrolase superfamily. BphD family. Homodimer.

It carries out the reaction 2,6-dioxo-6-phenylhexa-3-enoate + H2O = 2-oxopent-4-enoate + benzoate + H(+). It participates in xenobiotic degradation; biphenyl degradation; 2-hydroxy-2,4-pentadienoate and benzoate from biphenyl: step 4/4. In terms of biological role, catalyzes an unusual C-C bond hydrolysis of 2-hydroxy-6-oxo-6-phenylhexa-2,4-dienoic acid (HOPDA) to produce benzoic acid and 2-hydroxy-2,4-pentadienoic acid (HPD). In Burkholderia cepacia (Pseudomonas cepacia), this protein is 2-hydroxy-6-oxo-6-phenylhexa-2,4-dienoate hydrolase.